The chain runs to 457 residues: Senescence-associated protein OSA15, chloroplastic (457 aa).

Residues 1–57 constitute a chloroplast transit peptide; sequence MATRIPGTVAASGVYYNDQYRMPCKLKGIHCMALNCIPQKAKVRKCMNGYQSTFRFC.

The protein belongs to the ATA15/OSA15 family. Expressed in leaves (at protein level).

Its subcellular location is the plastid. It localises to the chloroplast. In terms of biological role, may be involved in the regulation of leaf senescence. In Oryza sativa subsp. japonica (Rice), this protein is Senescence-associated protein OSA15, chloroplastic.